A 396-amino-acid polypeptide reads, in one-letter code: S-adenosylmethionine synthase (396 aa).

His-15 is a binding site for ATP. Asp-17 provides a ligand contact to Mg(2+). Residue Glu-43 coordinates K(+). Glu-56 and Gln-99 together coordinate L-methionine. The flexible loop stretch occupies residues 99-109; sequence QSPDIALGVNR. ATP is bound by residues 175–177, 241–242, Asp-250, 256–257, Ala-273, and Lys-277; these read DGK, RF, and RK. Asp-250 serves as a coordination point for L-methionine. Lys-281 contacts L-methionine.

Belongs to the AdoMet synthase family. Homotetramer; dimer of dimers. The cofactor is Mg(2+). Requires K(+) as cofactor.

The protein resides in the cytoplasm. The enzyme catalyses L-methionine + ATP + H2O = S-adenosyl-L-methionine + phosphate + diphosphate. It participates in amino-acid biosynthesis; S-adenosyl-L-methionine biosynthesis; S-adenosyl-L-methionine from L-methionine: step 1/1. Its function is as follows. Catalyzes the formation of S-adenosylmethionine (AdoMet) from methionine and ATP. The overall synthetic reaction is composed of two sequential steps, AdoMet formation and the subsequent tripolyphosphate hydrolysis which occurs prior to release of AdoMet from the enzyme. The chain is S-adenosylmethionine synthase from Carboxydothermus hydrogenoformans (strain ATCC BAA-161 / DSM 6008 / Z-2901).